Reading from the N-terminus, the 451-residue chain is Aminodeoxychorismate synthase component 1 (451 aa).

Residues Ser34, 41–44, and 238–240 contribute to the L-tryptophan site; these read HNRF and PFS. Residue Glu256 is the Proton donor of the active site. Catalysis depends on Lys272, which acts as the N6-(4-deoxychorismate)-lysine intermediate.

This sequence belongs to the anthranilate synthase component I family. As to quaternary structure, monomer. Heterodimer consisting of two non-identical subunits: a glutamine amidotransferase subunit (PabA) and a aminodeoxychorismate synthase subunit (PabB). Mg(2+) is required as a cofactor.

It catalyses the reaction chorismate + L-glutamine = 4-amino-4-deoxychorismate + L-glutamate. It functions in the pathway cofactor biosynthesis; tetrahydrofolate biosynthesis; 4-aminobenzoate from chorismate: step 1/2. Functionally, part of a heterodimeric complex that catalyzes the two-step biosynthesis of 4-amino-4-deoxychorismate (ADC), a precursor of p-aminobenzoate (PABA) and tetrahydrofolate. In the first step, a glutamine amidotransferase (PabA) generates ammonia as a substrate that, along with chorismate, is used in the second step, catalyzed by aminodeoxychorismate synthase (PabB) to produce ADC. The protein is Aminodeoxychorismate synthase component 1 (pabB) of Klebsiella aerogenes (Enterobacter aerogenes).